The chain runs to 220 residues: Protein DGCR6 (220 aa).

Residues 76–142 (KSLYNQRLRL…EQRAMDQKIV (67 aa)) adopt a coiled-coil conformation.

The protein belongs to the gonadal family. As to expression, found in all tissues examined with highest expression in liver, heart and skeletal muscle. Lower levels in pancreas and placenta. Weak expression in brain.

Its subcellular location is the nucleus. In terms of biological role, may play a role in neural crest cell migration into the third and fourth pharyngeal pouches. This chain is Protein DGCR6 (DGCR6), found in Homo sapiens (Human).